The sequence spans 372 residues: Tyrosine--tRNA ligase (372 aa).

Residues tyrosine 37, tyrosine 169, glutamine 173, aspartate 176, and glutamine 191 each contribute to the L-tyrosine site. The 'KMSKS' region motif lies at 246-250 (KMSKS). Lysine 249 is an ATP binding site.

This sequence belongs to the class-I aminoacyl-tRNA synthetase family. TyrS type 4 subfamily. Homodimer.

The protein resides in the cytoplasm. It catalyses the reaction tRNA(Tyr) + L-tyrosine + ATP = L-tyrosyl-tRNA(Tyr) + AMP + diphosphate + H(+). Functionally, catalyzes the attachment of tyrosine to tRNA(Tyr) in a two-step reaction: tyrosine is first activated by ATP to form Tyr-AMP and then transferred to the acceptor end of tRNA(Tyr). The sequence is that of Tyrosine--tRNA ligase from Pyrobaculum arsenaticum (strain DSM 13514 / JCM 11321 / PZ6).